The sequence spans 253 residues: MIPDALTPAGRELLRRGADDLGLDVAPHEEQFARLLALLRAGNERLNLTALKTEEDIVLKHFVDSLTTLRGGHLDGEWKTLDLGTGAGFPALPLAILRPELRLTPLDSIRKKIDFVRETAAELGLSNVTPQVGRAETLGQSAEHRGSYDRVVARAVAALPVLAELALPLLRVGGVFVAQKGPLSEEELDAGRRAAGEVGGRIIEVDPFTLPVSGDARTLIVLEKQRPTPAKYPRREGVPTHQPLFWKAKEQSR.

Residues G84, F89, 135–136, and R154 contribute to the S-adenosyl-L-methionine site; that span reads AE. A disordered region spans residues 228–253; the sequence is TPAKYPRREGVPTHQPLFWKAKEQSR.

Belongs to the methyltransferase superfamily. RNA methyltransferase RsmG family.

Its subcellular location is the cytoplasm. Specifically methylates the N7 position of a guanine in 16S rRNA. The sequence is that of Ribosomal RNA small subunit methyltransferase G from Deinococcus radiodurans (strain ATCC 13939 / DSM 20539 / JCM 16871 / CCUG 27074 / LMG 4051 / NBRC 15346 / NCIMB 9279 / VKM B-1422 / R1).